Here is a 443-residue protein sequence, read N- to C-terminus: Putative transporter AmpG 1 (443 aa).

Helical transmembrane passes span 6–26 (HVCIIIWLFGFISGFNIMITG), 43–63 (IGILSFITLPYSINFLLAPVF), 74–96 (ILGHRLSWICLTSTTLISLTSIL), 106–128 (VLLSFIAFIISFFSATQDTILSA), 144–164 (GIYIFGYRVGMLLASSGAIYL), 172–192 (KIYQIFACVIFVYLILLILVS), 255–275 (DISLAYFIVLILIFLVLYRLP), 300–320 (VCKFCGVIGAIIGGLIGGIIM), 326–346 (LYSILLFGIIHALSHILFILL), 355–375 (ILFITIGIESITGGMTMTAYI), 394–414 (LSSMMGISRSIFPIISGYMVV), and 416–436 (FGWQNFFLFTTIITIPSLLIL).

Belongs to the major facilitator superfamily.

The protein localises to the cell inner membrane. The chain is Putative transporter AmpG 1 (ampG1) from Rickettsia typhi (strain ATCC VR-144 / Wilmington).